The following is a 340-amino-acid chain: Heat-inducible transcription repressor HrcA (340 aa).

The protein belongs to the HrcA family.

Functionally, negative regulator of class I heat shock genes (grpE-dnaK-dnaJ and groELS operons). Prevents heat-shock induction of these operons. This chain is Heat-inducible transcription repressor HrcA, found in Mycoplasmopsis synoviae (strain 53) (Mycoplasma synoviae).